The following is a 343-amino-acid chain: 4-hydroxy-2-oxovalerate aldolase 4 (343 aa).

One can recognise a Pyruvate carboxyltransferase domain in the interval Val8 to Thr260. Arg16–Asp17 contributes to the substrate binding site. Asp17 contacts Mn(2+). His20 acts as the Proton acceptor in catalysis. Substrate contacts are provided by Ser170 and His199. The Mn(2+) site is built by His199 and His201. Tyr290 is a binding site for substrate.

Belongs to the 4-hydroxy-2-oxovalerate aldolase family.

The catalysed reaction is (S)-4-hydroxy-2-oxopentanoate = acetaldehyde + pyruvate. The polypeptide is 4-hydroxy-2-oxovalerate aldolase 4 (Dechloromonas aromatica (strain RCB)).